The following is a 166-amino-acid chain: MFPMVTEFMNYGQQTVRAARYIGQGFIITLSHANRLPVTIQYPYEKLITSERFRGRIHFEFDKCIACEVCVRVCPIDLPVVDWKLETDIRKKRLLNYSIDFGICIFCGNCVEYCPTNCLSMTEEYELSTYDRHELNYNQIALGRLPMSIIDDYTIRTILNLPEIKT.

2 consecutive 4Fe-4S ferredoxin-type domains span residues 55-84 (GRIH…VDWK) and 95-124 (LNYS…MTEE). [4Fe-4S] cluster is bound by residues cysteine 64, cysteine 67, cysteine 70, cysteine 74, cysteine 104, cysteine 107, cysteine 110, and cysteine 114.

This sequence belongs to the complex I 23 kDa subunit family. In terms of assembly, NDH is composed of at least 16 different subunits, 5 of which are encoded in the nucleus. Requires [4Fe-4S] cluster as cofactor.

Its subcellular location is the plastid. The protein localises to the chloroplast thylakoid membrane. The catalysed reaction is a plastoquinone + NADH + (n+1) H(+)(in) = a plastoquinol + NAD(+) + n H(+)(out). It catalyses the reaction a plastoquinone + NADPH + (n+1) H(+)(in) = a plastoquinol + NADP(+) + n H(+)(out). Its function is as follows. NDH shuttles electrons from NAD(P)H:plastoquinone, via FMN and iron-sulfur (Fe-S) centers, to quinones in the photosynthetic chain and possibly in a chloroplast respiratory chain. The immediate electron acceptor for the enzyme in this species is believed to be plastoquinone. Couples the redox reaction to proton translocation, and thus conserves the redox energy in a proton gradient. The polypeptide is NAD(P)H-quinone oxidoreductase subunit I, chloroplastic (Stevia rebaudiana (Stevia)).